A 252-amino-acid chain; its full sequence is Triosephosphate isomerase (252 aa).

9–11 (NWK) contacts substrate. His96 serves as the catalytic Electrophile. Glu166 serves as the catalytic Proton acceptor. Residues Gly172, Ser212, and 233–234 (GG) contribute to the substrate site.

This sequence belongs to the triosephosphate isomerase family. As to quaternary structure, homodimer.

Its subcellular location is the cytoplasm. It carries out the reaction D-glyceraldehyde 3-phosphate = dihydroxyacetone phosphate. It participates in carbohydrate biosynthesis; gluconeogenesis. The protein operates within carbohydrate degradation; glycolysis; D-glyceraldehyde 3-phosphate from glycerone phosphate: step 1/1. Involved in the gluconeogenesis. Catalyzes stereospecifically the conversion of dihydroxyacetone phosphate (DHAP) to D-glyceraldehyde-3-phosphate (G3P). The sequence is that of Triosephosphate isomerase from Chlorobium chlorochromatii (strain CaD3).